The primary structure comprises 156 residues: ATP synthase subunit b (156 aa).

A helical transmembrane segment spans residues 3 to 23 (ITLTIFAQALAFAGLIWIVAT).

This sequence belongs to the ATPase B chain family. In terms of assembly, F-type ATPases have 2 components, F(1) - the catalytic core - and F(0) - the membrane proton channel. F(1) has five subunits: alpha(3), beta(3), gamma(1), delta(1), epsilon(1). F(0) has three main subunits: a(1), b(2) and c(10-14). The alpha and beta chains form an alternating ring which encloses part of the gamma chain. F(1) is attached to F(0) by a central stalk formed by the gamma and epsilon chains, while a peripheral stalk is formed by the delta and b chains.

It is found in the cell inner membrane. Functionally, f(1)F(0) ATP synthase produces ATP from ADP in the presence of a proton or sodium gradient. F-type ATPases consist of two structural domains, F(1) containing the extramembraneous catalytic core and F(0) containing the membrane proton channel, linked together by a central stalk and a peripheral stalk. During catalysis, ATP synthesis in the catalytic domain of F(1) is coupled via a rotary mechanism of the central stalk subunits to proton translocation. In terms of biological role, component of the F(0) channel, it forms part of the peripheral stalk, linking F(1) to F(0). This is ATP synthase subunit b from Xanthomonas oryzae pv. oryzae (strain MAFF 311018).